The primary structure comprises 297 residues: uncharacterized protein (297 aa).

The N-terminal stretch at 1-24 is a signal peptide; sequence MRAINKFLITVCIALLASVAVALG. Residues cysteine 58, cysteine 61, histidine 62, cysteine 141, cysteine 144, histidine 145, cysteine 167, cysteine 170, histidine 171, cysteine 223, cysteine 226, histidine 227, cysteine 264, cysteine 267, and histidine 268 each coordinate heme. The disordered stretch occupies residues 277-297; it reads TNSVDTWSREGEGAEVQQLPH.

Binds 5 heme groups per subunit.

This is an uncharacterized protein from Archaeoglobus fulgidus (strain ATCC 49558 / DSM 4304 / JCM 9628 / NBRC 100126 / VC-16).